The sequence spans 168 residues: Large ribosomal subunit protein uL10 (168 aa).

It belongs to the universal ribosomal protein uL10 family. In terms of assembly, part of the ribosomal stalk of the 50S ribosomal subunit. The N-terminus interacts with L11 and the large rRNA to form the base of the stalk. The C-terminus forms an elongated spine to which L12 dimers bind in a sequential fashion forming a multimeric L10(L12)X complex.

In terms of biological role, forms part of the ribosomal stalk, playing a central role in the interaction of the ribosome with GTP-bound translation factors. This chain is Large ribosomal subunit protein uL10, found in Ralstonia pickettii (strain 12J).